Consider the following 453-residue polypeptide: Chromosomal replication initiator protein DnaA (453 aa).

Residues 1 to 74 are domain I, interacts with DnaA modulators; that stretch reads MKEKQFWNRI…GFEIYDAEIT (74 aa). The domain II stretch occupies residues 74-113; the sequence is TPHYIFTKPQDTTSSQVEEATNLTLYDYSPKLVSIPYSDT. The tract at residues 114-331 is domain III, AAA+ region; that stretch reads GLKEKYTFDN…GAINDITLIA (218 aa). Residues Gly158, Gly160, Lys161, and Thr162 each contribute to the ATP site. A domain IV, binds dsDNA region spans residues 332–453; sequence RVKKIKDITI…EIESIKKKIK (122 aa).

This sequence belongs to the DnaA family. As to quaternary structure, oligomerizes as a right-handed, spiral filament on DNA at oriC. Interacts (via domains I and III) with CcrZ.

It is found in the cytoplasm. Its activity is regulated as follows. CcrZ stimulates DnaA, possibly by phosphorylation of an intermediate molecule, to initiate DNA replication. In terms of biological role, plays an essential role in the initiation and regulation of chromosomal replication. ATP-DnaA binds to the origin of replication (oriC) to initiate formation of the DNA replication initiation complex once per cell cycle. Binds the DnaA box (a 9 base pair repeat at the origin) and separates the double-stranded (ds)DNA. Forms a right-handed helical filament on oriC DNA; dsDNA binds to the exterior of the filament while single-stranded (ss)DNA is stabiized in the filament's interior. The ATP-DnaA-oriC complex binds and stabilizes one strand of the AT-rich DNA unwinding element (DUE), permitting loading of DNA polymerase. After initiation quickly degrades to an ADP-DnaA complex that is not apt for DNA replication. Binds acidic phospholipids. Mutations in this gene suppress a deletion of cell cycle regulator ccrZ. The protein is Chromosomal replication initiator protein DnaA of Streptococcus pneumoniae serotype 2 (strain D39 / NCTC 7466).